Here is a 252-residue protein sequence, read N- to C-terminus: uncharacterized protein (252 aa).

28–35 contacts ATP; sequence GCDGTGKS.

It to E.coli YghS and YghT.

This is an uncharacterized protein from Escherichia coli O6:H1 (strain CFT073 / ATCC 700928 / UPEC).